A 52-amino-acid chain; its full sequence is Large ribosomal subunit protein bL33 (52 aa).

This sequence belongs to the bacterial ribosomal protein bL33 family.

The chain is Large ribosomal subunit protein bL33 (rpmG) from Chlamydia muridarum (strain MoPn / Nigg).